The following is a 430-amino-acid chain: Gamma-glutamyl phosphate reductase (430 aa).

The protein belongs to the gamma-glutamyl phosphate reductase family.

It localises to the cytoplasm. It carries out the reaction L-glutamate 5-semialdehyde + phosphate + NADP(+) = L-glutamyl 5-phosphate + NADPH + H(+). Its pathway is amino-acid biosynthesis; L-proline biosynthesis; L-glutamate 5-semialdehyde from L-glutamate: step 2/2. Its function is as follows. Catalyzes the NADPH-dependent reduction of L-glutamate 5-phosphate into L-glutamate 5-semialdehyde and phosphate. The product spontaneously undergoes cyclization to form 1-pyrroline-5-carboxylate. In Rhodopseudomonas palustris (strain BisA53), this protein is Gamma-glutamyl phosphate reductase.